The sequence spans 427 residues: Bifunctional enzyme MtnB/MtnX (427 aa).

Residues 1-221 form an HK-MTPenyl-1-P phosphatase region; it reads MRKPLIICDF…LEETAEVKEW (221 aa). The interval 222-427 is MTRu-1-P dehydratase; the sequence is MSEQKRQELA…KLKALQAYHV (206 aa). 2 residues coordinate Zn(2+): His317 and His319.

This sequence in the N-terminal section; belongs to the HAD-like hydrolase superfamily. MtnX family. The protein in the C-terminal section; belongs to the aldolase class II family. MtnB subfamily. As to quaternary structure, homotetramer. The cofactor is Zn(2+).

It carries out the reaction 5-(methylsulfanyl)-D-ribulose 1-phosphate = 5-methylsulfanyl-2,3-dioxopentyl phosphate + H2O. The catalysed reaction is 2-hydroxy-5-methylsulfanyl-3-oxopent-1-enyl phosphate + H2O = 1,2-dihydroxy-5-(methylsulfanyl)pent-1-en-3-one + phosphate. It participates in amino-acid biosynthesis; L-methionine biosynthesis via salvage pathway; L-methionine from S-methyl-5-thio-alpha-D-ribose 1-phosphate: step 2/6. Its pathway is amino-acid biosynthesis; L-methionine biosynthesis via salvage pathway; L-methionine from S-methyl-5-thio-alpha-D-ribose 1-phosphate: step 4/6. Catalyzes the dehydration of methylthioribulose-1-phosphate (MTRu-1-P) into 2,3-diketo-5-methylthiopentyl-1-phosphate (DK-MTP-1-P). Its function is as follows. Dephosphorylates 2-hydroxy-3-keto-5-methylthiopentenyl-1-phosphate (HK-MTPenyl-1-P) yielding 1,2-dihydroxy-3-keto-5-methylthiopentene (DHK-MTPene). This chain is Bifunctional enzyme MtnB/MtnX (mtnB/mtnX), found in Bacillus licheniformis (strain ATCC 14580 / DSM 13 / JCM 2505 / CCUG 7422 / NBRC 12200 / NCIMB 9375 / NCTC 10341 / NRRL NRS-1264 / Gibson 46).